A 33-amino-acid polypeptide reads, in one-letter code: Brevinin-2DYc (33 aa).

Cys27 and Cys33 are disulfide-bonded.

Expressed by the skin glands.

Its subcellular location is the secreted. In terms of biological role, antimicrobial peptide. A mixture of Brevinin-2DYc/2DYd is active against the Gram-positive bacterium S.aureus (MIC=15 uM) and the Gram-negative bacterium E.coli (MIC=15 uM). The chain is Brevinin-2DYc from Rana dybowskii (Dybovsky's frog).